Reading from the N-terminus, the 602-residue chain is Lysine--tRNA ligase, chloroplastic/mitochondrial (602 aa).

Residues 50–62 (SSSSSSATTAETS) show a composition bias toward low complexity. The segment at 50 to 83 (SSSSSSATTAETSKPSGRNRRSASSSNSTSDREA) is disordered. A DNA-binding region (OB) is located at residues 136–214 (VSIAGRVVAR…SICVNSFSIL (79 aa)). Residues Gly-285 and Glu-309 each coordinate substrate. Residues 331–333 (RNE) and 339–340 (HN) each bind ATP. Substrate-binding residues include Glu-347 and Tyr-349. Ca(2+) is bound by residues Glu-492 and Glu-499. ATP is bound at residue 499–500 (EM). Substrate contacts are provided by Asn-502 and Glu-506. The span at 524-543 (HNAKRAEAVRESPEPNAKKD) shows a compositional bias: basic and acidic residues. Residues 524-550 (HNAKRAEAVRESPEPNAKKDDDDDESY) are disordered. 575-578 (GIDR) serves as a coordination point for ATP.

Belongs to the class-II aminoacyl-tRNA synthetase family. The cofactor is Ca(2+).

The protein localises to the plastid. It is found in the chloroplast. It localises to the mitochondrion. The catalysed reaction is tRNA(Lys) + L-lysine + ATP = L-lysyl-tRNA(Lys) + AMP + diphosphate. Functionally, catalyzes the specific attachment of an amino acid to its cognate tRNA in a 2 step reaction: the amino acid (AA) is first activated by ATP to form AA-AMP and then transferred to the acceptor end of the tRNA. The sequence is that of Lysine--tRNA ligase, chloroplastic/mitochondrial from Arabidopsis thaliana (Mouse-ear cress).